We begin with the raw amino-acid sequence, 401 residues long: Argininosuccinate synthase (401 aa).

9 to 17 contributes to the ATP binding site; sequence AYSGGLDTS. Tyr86 lines the L-citrulline pocket. Residue Gly116 coordinates ATP. Residues Thr118, Asn122, and Asp123 each coordinate L-aspartate. Position 122 (Asn122) interacts with L-citrulline. Residues Arg126, Ser174, Ser183, Glu259, and Tyr271 each contribute to the L-citrulline site.

It belongs to the argininosuccinate synthase family. Type 1 subfamily. Homotetramer.

The protein localises to the cytoplasm. The enzyme catalyses L-citrulline + L-aspartate + ATP = 2-(N(omega)-L-arginino)succinate + AMP + diphosphate + H(+). Its pathway is amino-acid biosynthesis; L-arginine biosynthesis; L-arginine from L-ornithine and carbamoyl phosphate: step 2/3. The chain is Argininosuccinate synthase from Bacillus cereus (strain AH187).